Here is a 249-residue protein sequence, read N- to C-terminus: Protein ZPS1 (249 aa).

The N-terminal stretch at 1 to 20 (MKFSSGKSIIFATIASLALS) is a signal peptide. N28, N57, N98, and N217 each carry an N-linked (GlcNAc...) asparagine glycan.

Belongs to the ZPS1 family.

The chain is Protein ZPS1 (ZPS1) from Saccharomyces cerevisiae (strain ATCC 204508 / S288c) (Baker's yeast).